A 129-amino-acid polypeptide reads, in one-letter code: DNA-directed RNA polymerase subunit omega (129 aa).

The tract at residues 77-98 (VDEPESEVVPALSSAPQNPEAI) is disordered.

It belongs to the RNA polymerase subunit omega family. In terms of assembly, the RNAP catalytic core consists of 2 alpha, 1 beta, 1 beta' and 1 omega subunit. When a sigma factor is associated with the core the holoenzyme is formed, which can initiate transcription.

The enzyme catalyses RNA(n) + a ribonucleoside 5'-triphosphate = RNA(n+1) + diphosphate. In terms of biological role, promotes RNA polymerase assembly. Latches the N- and C-terminal regions of the beta' subunit thereby facilitating its interaction with the beta and alpha subunits. This Methylocella silvestris (strain DSM 15510 / CIP 108128 / LMG 27833 / NCIMB 13906 / BL2) protein is DNA-directed RNA polymerase subunit omega.